A 72-amino-acid polypeptide reads, in one-letter code: Threonine dehydratase operon activator protein (72 aa).

Functionally, probable trans-acting positive activator for the tdc operon. This is Threonine dehydratase operon activator protein (tdcR) from Escherichia coli (strain K12).